Reading from the N-terminus, the 374-residue chain is Acid phosphatase-like protein XcAP-1 (374 aa).

An N-terminal signal peptide occupies residues 1 to 17 (TTIILLIAFAAIQLSKA). Serotonin is bound at residue valine 25. 3 cysteine pairs are disulfide-bonded: cysteine 144-cysteine 372, cysteine 165-cysteine 219, and cysteine 345-cysteine 349. Serotonin-binding residues include aspartate 245, aspartate 249, asparagine 271, and glutamine 283.

This sequence belongs to the histidine acid phosphatase family.

The protein localises to the secreted. Its function is as follows. Probably modulates blood feeding of fleas on vertebrate species by binding and sequestering different mediators involved in the host response. Binds biogenic amines: serotonin, adrenaline and noradrenaline. Binds leukotriene C4. Does not bind histamine, leukotriene B4, leukotriene D4, leukotriene E4, ADP, and stable analogs of thromboxane A2: U-46619 and cTXA2. This Xenopsylla cheopis (Oriental rat flea) protein is Acid phosphatase-like protein XcAP-1.